We begin with the raw amino-acid sequence, 124 residues long: Small ribosomal subunit protein uS12 (124 aa).

The disordered stretch occupies residues 1 to 28 (MPTINQLVRKGRTPKVSKTKAPALKGSP). The span at 9–18 (RKGRTPKVSK) shows a compositional bias: basic residues. A 3-methylthioaspartic acid modification is found at Asp-89.

The protein belongs to the universal ribosomal protein uS12 family. Part of the 30S ribosomal subunit. Contacts proteins S8 and S17. May interact with IF1 in the 30S initiation complex.

With S4 and S5 plays an important role in translational accuracy. Its function is as follows. Interacts with and stabilizes bases of the 16S rRNA that are involved in tRNA selection in the A site and with the mRNA backbone. Located at the interface of the 30S and 50S subunits, it traverses the body of the 30S subunit contacting proteins on the other side and probably holding the rRNA structure together. The combined cluster of proteins S8, S12 and S17 appears to hold together the shoulder and platform of the 30S subunit. This is Small ribosomal subunit protein uS12 from Paenarthrobacter aurescens (strain TC1).